Here is a 475-residue protein sequence, read N- to C-terminus: Glutamyl-tRNA(Gln) amidotransferase subunit A (475 aa).

Residues Lys-69 and Ser-144 each act as charge relay system in the active site. The active-site Acyl-ester intermediate is Ser-168.

This sequence belongs to the amidase family. GatA subfamily. As to quaternary structure, heterotrimer of A, B and C subunits.

It carries out the reaction L-glutamyl-tRNA(Gln) + L-glutamine + ATP + H2O = L-glutaminyl-tRNA(Gln) + L-glutamate + ADP + phosphate + H(+). Allows the formation of correctly charged Gln-tRNA(Gln) through the transamidation of misacylated Glu-tRNA(Gln) in organisms which lack glutaminyl-tRNA synthetase. The reaction takes place in the presence of glutamine and ATP through an activated gamma-phospho-Glu-tRNA(Gln). This chain is Glutamyl-tRNA(Gln) amidotransferase subunit A, found in Methanococcoides burtonii (strain DSM 6242 / NBRC 107633 / OCM 468 / ACE-M).